We begin with the raw amino-acid sequence, 99 residues long: uncharacterized protein (99 aa).

This is an uncharacterized protein from Saccharomyces cerevisiae (strain ATCC 204508 / S288c) (Baker's yeast).